The primary structure comprises 302 residues: Aspartate carbamoyltransferase catalytic subunit (302 aa).

Carbamoyl phosphate is bound by residues R53 and T54. K82 contacts L-aspartate. The carbamoyl phosphate site is built by R103, H131, and Q134. The L-aspartate site is built by R164 and R223. The carbamoyl phosphate site is built by L260 and P261.

This sequence belongs to the aspartate/ornithine carbamoyltransferase superfamily. ATCase family. As to quaternary structure, heterooligomer of catalytic and regulatory chains.

The enzyme catalyses carbamoyl phosphate + L-aspartate = N-carbamoyl-L-aspartate + phosphate + H(+). It functions in the pathway pyrimidine metabolism; UMP biosynthesis via de novo pathway; (S)-dihydroorotate from bicarbonate: step 2/3. Catalyzes the condensation of carbamoyl phosphate and aspartate to form carbamoyl aspartate and inorganic phosphate, the committed step in the de novo pyrimidine nucleotide biosynthesis pathway. The chain is Aspartate carbamoyltransferase catalytic subunit from Methanococcus vannielii (strain ATCC 35089 / DSM 1224 / JCM 13029 / OCM 148 / SB).